The chain runs to 232 residues: MNTITLTARPEALTFAPEQSALIVVDMQNAYASQGGYLDLAGFDVSSTAPVIENIKTAVAAAREAGMTIVWFQNGWDSDYLEAGGPGSPNFHKSNALKTMRRCPELHGKLLAKGGWDYQLVDELTPLPGDIVLPKPRYSGFFNTPLDSMLRARNIRHLVFTGIATNVCVESTLRDGFFLEYFGVVLEDATHQAGPPFAQQAALFNIETFFGWVSDVQSFCDALSPEALARIA.

Catalysis depends on Asp-26, which acts as the Proton acceptor. The active site involves Lys-135. Cys-168 acts as the Nucleophile in catalysis.

Belongs to the isochorismatase family. RutB subfamily.

The catalysed reaction is (Z)-3-ureidoacrylate + H2O + H(+) = (Z)-3-aminoacrylate + NH4(+) + CO2. The enzyme catalyses (Z)-3-ureidoacrylate + H2O = (Z)-3-aminoacrylate + carbamate + H(+). It carries out the reaction (Z)-2-methylureidoacrylate + H2O + H(+) = (Z)-2-methylaminoacrylate + NH4(+) + CO2. Its function is as follows. Hydrolyzes ureidoacrylate to form aminoacrylate and carbamate. The carbamate hydrolyzes spontaneously, thereby releasing one of the nitrogen atoms of the pyrimidine ring as ammonia and one of its carbon atoms as CO2. This Cronobacter sakazakii (strain ATCC BAA-894) (Enterobacter sakazakii) protein is Ureidoacrylate amidohydrolase RutB.